The sequence spans 234 residues: Synaptogyrin-1 (234 aa).

Met-1 carries the post-translational modification N-acetylmethionine. At 1-23 the chain is on the cytoplasmic side; sequence MEGGAYGAGKAGGAFDPYTLVRQ. In terms of domain architecture, MARVEL spans 20–173; the sequence is LVRQPHTILR…QAVLAFQRYQ (154 aa). Residues 24–44 form a helical membrane-spanning segment; the sequence is PHTILRVVSWVFSIVVFGSIV. Over 45 to 71 the chain is Lumenal; the sequence is NEGYLNNPEEEEEFCIYNRNPNACSYG. The helical transmembrane segment at 72–92 threads the bilayer; the sequence is VTVGVLAFLTCLLYLALDVYF. At 93-103 the chain is on the cytoplasmic side; that stretch reads PQISSVKDRKK. A helical membrane pass occupies residues 104–124; sequence AVLSDIGVSAFWAFFWFVGFC. The Lumenal portion of the chain corresponds to 125 to 148; it reads FLANQWQVSKPKDNPLNEGTDAAR. Residues 149–169 traverse the membrane as a helical segment; that stretch reads AAIAFSFFSIFTWAGQAVLAF. At 170–234 the chain is on the cytoplasmic side; that stretch reads QRYQIGADSA…EPQGYQSQGY (65 aa). A disordered region spans residues 201-234; the sequence is EPSAGSDPAGMGGTYQHPANAFDAEPQGYQSQGY.

Belongs to the synaptogyrin family.

The protein resides in the cytoplasmic vesicle. It localises to the secretory vesicle. It is found in the synaptic vesicle membrane. Its subcellular location is the melanosome. Its function is as follows. May play a role in regulated exocytosis. Modulates the localization of synaptophysin/SYP into synaptic-like microvesicles and may therefore play a role in synaptic-like microvesicle formation and/or maturation. Involved in the regulation of short-term and long-term synaptic plasticity. The polypeptide is Synaptogyrin-1 (Mus musculus (Mouse)).